Reading from the N-terminus, the 187-residue chain is Auxin-binding protein T85 (187 aa).

Residues 1 to 20 (MARHVLVVVAVLLFATAEAS) form the signal peptide. A disulfide bond links cysteine 22 and cysteine 177. Zn(2+)-binding residues include histidine 78, histidine 80, and glutamate 84. Asparagine 117 is a glycosylation site (N-linked (GlcNAc...) asparagine). Histidine 128 contacts Zn(2+). Residues 184–187 (KDEL) carry the Prevents secretion from ER motif.

In terms of assembly, homodimer.

It is found in the endoplasmic reticulum lumen. In terms of biological role, this is probably a receptor for the plant hormone auxin. The chain is Auxin-binding protein T85 (T85) from Nicotiana tabacum (Common tobacco).